Reading from the N-terminus, the 521-residue chain is CD166 antigen (521 aa).

Topologically, residues 1–465 (GSPVFIAFRS…NREQVNHRAT (465 aa)) are extracellular. 7 N-linked (GlcNAc...) asparagine glycosylation sites follow: N33, N105, N244, N299, N395, N418, and N437. In terms of domain architecture, Ig-like V-type 2 spans 63-172 (PTIVKVFKQP…YGPSGQKTVQ (110 aa)). Cystine bridges form between C95–C158, C208–C251, C292–C330, and C373–C423. Ig-like C2-type domains are found at residues 183–266 (PTEQ…TAIT), 271–347 (DLSL…ESLT), and 354–439 (PQIK…LNVS). A helical transmembrane segment spans residues 466-487 (LIVGIVLRLLHGALVAGVVYWL). At 488 to 521 (YVKKSKTASKHVNKDLGNLEENKKLEQNNHRTEA) the chain is on the cytoplasmic side. The segment at 500–521 (NKDLGNLEENKKLEQNNHRTEA) is disordered. The span at 507–521 (EENKKLEQNNHRTEA) shows a compositional bias: basic and acidic residues.

Homodimer. Interacts (via extracellular domain) with CD6 (via extracellular domain). Homodimerization and interaction with CD6 involve the same region and cannot occur simultaneously. The affinity for CD6 is much higher than the affinity for self-association. Interacts (via glycosylated extracellular domain) with LGALS1 and LGALS3. Interaction with LGALS1 or LGALS3 inhibits interaction with CD6. In terms of processing, glycosylated.

The protein localises to the cell membrane. The protein resides in the cell projection. It localises to the axon. It is found in the dendrite. Cell adhesion molecule that mediates both heterotypic cell-cell contacts via its interaction with CD6, as well as homotypic cell-cell contacts. Promotes T-cell activation and proliferation via its interactions with CD6. Contributes to the formation and maturation of the immunological synapse via its interactions with CD6. Mediates homotypic interactions with cells that express ALCAM. Mediates attachment of dendritic cells onto endothelial cells via homotypic interaction. Inhibits endothelial cell migration and promotes endothelial tube formation via homotypic interactions. Required for normal organization of the lymph vessel network. Required for normal hematopoietic stem cell engraftment in the bone marrow. Plays a role in hematopoiesis; required for normal numbers of hematopoietic stem cells in bone marrow. Promotes in vitro osteoblast proliferation and differentiation. Promotes neurite extension, axon growth and axon guidance; axons grow preferentially on surfaces that contain ALCAM. Mediates outgrowth and pathfinding for retinal ganglion cell axons. This chain is CD166 antigen (ALCAM), found in Canis lupus familiaris (Dog).